Consider the following 359-residue polypeptide: Fructose-bisphosphate aldolase class 2 (359 aa).

S62 contacts D-glyceraldehyde 3-phosphate. The active-site Proton donor is the D110. Zn(2+) contacts are provided by H111, D145, E175, and H227. Dihydroxyacetone phosphate is bound at residue G228. A Zn(2+)-binding site is contributed by H265. Dihydroxyacetone phosphate contacts are provided by residues 266-268 and 287-290; these read GGS and NIDT.

This sequence belongs to the class II fructose-bisphosphate aldolase family. Zn(2+) serves as cofactor.

It carries out the reaction beta-D-fructose 1,6-bisphosphate = D-glyceraldehyde 3-phosphate + dihydroxyacetone phosphate. The protein operates within carbohydrate degradation; glycolysis; D-glyceraldehyde 3-phosphate and glycerone phosphate from D-glucose: step 4/4. In terms of biological role, catalyzes the aldol condensation of dihydroxyacetone phosphate (DHAP or glycerone-phosphate) with glyceraldehyde 3-phosphate (G3P) to form fructose 1,6-bisphosphate (FBP) in gluconeogenesis and the reverse reaction in glycolysis. This chain is Fructose-bisphosphate aldolase class 2 (fbaA), found in Buchnera aphidicola subsp. Baizongia pistaciae (strain Bp).